The primary structure comprises 244 residues: Carboxy-S-adenosyl-L-methionine synthase (244 aa).

S-adenosyl-L-methionine-binding positions include Tyr-40, 65–67 (GCS), 90–91 (DN), 119–120 (DI), Asn-134, and Arg-201.

It belongs to the class I-like SAM-binding methyltransferase superfamily. Cx-SAM synthase family. As to quaternary structure, homodimer.

The catalysed reaction is prephenate + S-adenosyl-L-methionine = carboxy-S-adenosyl-L-methionine + 3-phenylpyruvate + H2O. Functionally, catalyzes the conversion of S-adenosyl-L-methionine (SAM) to carboxy-S-adenosyl-L-methionine (Cx-SAM). The chain is Carboxy-S-adenosyl-L-methionine synthase from Geobacter sp. (strain M21).